The chain runs to 241 residues: Probable transcriptional regulatory protein Maqu_2154 (241 aa).

Belongs to the TACO1 family.

It localises to the cytoplasm. This chain is Probable transcriptional regulatory protein Maqu_2154, found in Marinobacter nauticus (strain ATCC 700491 / DSM 11845 / VT8) (Marinobacter aquaeolei).